Here is a 152-residue protein sequence, read N- to C-terminus: Transcriptional regulator MraZ (152 aa).

SpoVT-AbrB domains are found at residues 7–54 and 83–126; these read INSI…TMDE and ASEM…SQEA.

Belongs to the MraZ family. Forms oligomers.

The protein localises to the cytoplasm. Its subcellular location is the nucleoid. This Hydrogenovibrio crunogenus (strain DSM 25203 / XCL-2) (Thiomicrospira crunogena) protein is Transcriptional regulator MraZ.